A 207-amino-acid chain; its full sequence is MSPPDPQQRRIGILGGTFNPVHHGHLIMAEQALWQFNLDQVLWMPAGDPPHKPLAAGASKADRLAMVKLAIADHERFACSDLEIRRPGPSYTIETLRSLMQEQPDTQWYWIIGVDALRDLPQWYQAEELARLCHWIVAPRIDAGDAAQVLRSVAAKLPIRAAILDAPTLTLSSTYLRQQIQKGGSIRYLVPPAVEHYIRQHRLYLDP.

This sequence belongs to the NadD family.

The enzyme catalyses nicotinate beta-D-ribonucleotide + ATP + H(+) = deamido-NAD(+) + diphosphate. It functions in the pathway cofactor biosynthesis; NAD(+) biosynthesis; deamido-NAD(+) from nicotinate D-ribonucleotide: step 1/1. Its function is as follows. Catalyzes the reversible adenylation of nicotinate mononucleotide (NaMN) to nicotinic acid adenine dinucleotide (NaAD). This Synechococcus sp. (strain JA-3-3Ab) (Cyanobacteria bacterium Yellowstone A-Prime) protein is Probable nicotinate-nucleotide adenylyltransferase.